We begin with the raw amino-acid sequence, 637 residues long: Threonine--tRNA ligase (637 aa).

In terms of domain architecture, TGS spans 1-61 (MPVITLPNGS…EQDAALSIVT (61 aa)). The interval 242-533 (DHRKLGKKFD…LIENYEGAFP (292 aa)) is catalytic. Residues C333, H384, and H510 each contribute to the Zn(2+) site.

Belongs to the class-II aminoacyl-tRNA synthetase family. Homodimer. The cofactor is Zn(2+).

The protein resides in the cytoplasm. It carries out the reaction tRNA(Thr) + L-threonine + ATP = L-threonyl-tRNA(Thr) + AMP + diphosphate + H(+). Catalyzes the attachment of threonine to tRNA(Thr) in a two-step reaction: L-threonine is first activated by ATP to form Thr-AMP and then transferred to the acceptor end of tRNA(Thr). Also edits incorrectly charged L-seryl-tRNA(Thr). The sequence is that of Threonine--tRNA ligase from Teredinibacter turnerae (strain ATCC 39867 / T7901).